Consider the following 58-residue polypeptide: Ribosome modulation factor (58 aa).

A disordered region spans residues M1 to N28.

It belongs to the ribosome modulation factor family.

Its subcellular location is the cytoplasm. Functionally, during stationary phase, converts 70S ribosomes to an inactive dimeric form (100S ribosomes). This is Ribosome modulation factor from Idiomarina loihiensis (strain ATCC BAA-735 / DSM 15497 / L2-TR).